Consider the following 339-residue polypeptide: FR-33289 synthase (339 aa).

Residues histidine 150, aspartate 152, and histidine 288 each coordinate Fe(2+).

This sequence belongs to the TfdA dioxygenase family. Homodimer. Fe(2+) is required as a cofactor.

The enzyme catalyses 3-(N-acetyl-N-hydroxy)aminopropylphosphonate + 2-oxoglutarate + O2 = (R)-(3-(acetylhydroxyamino)-2-hydroxypropyl)phosphonate + succinate + CO2. It functions in the pathway antibiotic biosynthesis. Its function is as follows. Monooxygenase involved in the biosynthesis of the phosphonate antibiotic FR-33289, an antimalarial agent. Catalyzes the oxidative decarboxylation of the antibiotic FR-900098 (3-(N-acetyl-N-hydroxy)aminopropylphosphonate) to form FR-33289 ((R)-(3-(acetylhydroxyamino)-2-hydroxypropyl)phosphonate). The chain is FR-33289 synthase from Streptomyces rubellomurinus (strain ATCC 31215).